Consider the following 224-residue polypeptide: LRP chaperone MESD (224 aa).

A signal peptide spans 1-29 (MAASRWLRAVLLFLCASDLLLLPPPNAYA). The interval 1–155 (MAASRWLRAV…DRAIFMLRDG (155 aa)) is chaperone domain. Disordered stretches follow at residues 28–49 (YAAD…IRDY) and 178–224 (GQMY…REDL). An escort domain region spans residues 156–195 (SYAWEIKDFLVSQDRCAEVTLEGQMYPGKGGGSKEKNKTK). Over residues 187–224 (GSKEKNKTKPEKAKKKEGDPKPRASKEDNRAGSRREDL) the composition is skewed to basic and acidic residues. Asn192 carries N-linked (GlcNAc...) asparagine glycosylation. The Prevents secretion from ER signature appears at 221–224 (REDL).

Belongs to the MESD family. Monomer. Interacts with LRP5; the interaction prevents LRP5 from forming aggregates and chaperones LRP6 to the plasma membrane. Interacts with LRP6; the interaction prevents LRP6 from forming aggregates and chaperones LRP6 to the plasma membrane. Interacts with LRP4; the interaction promotes glycosylation of LRP4 and its cell-surface expression. As to expression, expressed in many tissues, but not in skeletal muscles. In the retina expressed in retinal ganglion cells, inner and outer plexiform layers, photoreceptor inner and outer segments and retinal pigment epithelium (at protein level).

Its subcellular location is the endoplasmic reticulum. In terms of biological role, chaperone specifically assisting the folding of beta-propeller/EGF modules within the family of low-density lipoprotein receptors (LDLRs). Acts as a modulator of the Wnt pathway through chaperoning the coreceptors of the canonical Wnt pathway, LRP5 and LRP6, to the plasma membrane. Essential for specification of embryonic polarity and mesoderm induction. Plays an essential role in neuromuscular junction (NMJ) formation by promoting cell-surface expression of LRP4. May regulate phagocytosis of apoptotic retinal pigment epithelium (RPE) cells. This Mus musculus (Mouse) protein is LRP chaperone MESD.